The sequence spans 444 residues: Orexin receptor type 2 (444 aa).

The segment covering 1–10 (MSGTKLEDSP) has biased composition (basic and acidic residues). A disordered region spans residues 1 to 30 (MSGTKLEDSPPCRNWSSAPELNETQEPFLN). Over 1–54 (MSGTKLEDSPPCRNWSSAPELNETQEPFLNPTDYDDEEFLRYLWREYLHPKEYE) the chain is Extracellular. Residues Asn14 and Asn22 are each glycosylated (N-linked (GlcNAc...) asparagine). Positions 14–27 (NWSSAPELNETQEP) are enriched in polar residues. Positions 33 to 49 (DYDDEEFLRYLWREYLH) are required for response to orexin-A. A helical transmembrane segment spans residues 55–75 (WVLIAGYIIVFVVALIGNVLV). At 76–88 (CVAVWKNHHMRTV) the chain is on the cytoplasmic side. The chain crosses the membrane as a helical span at residues 89–110 (TNYFIVNLSLADVLVTITCLPA). At 111-127 (TLVVDITETWFFGQSLC) the chain is on the extracellular side. Cys127 and Cys210 are oxidised to a cystine. A helical transmembrane segment spans residues 128–150 (KVIPYLQTVSVSVSVLTLSCIAL). Topologically, residues 151–170 (DRWYAICHPLMFKSTAKRAR) are cytoplasmic. Residues 171 to 191 (NSIVIIWIVSCIIMIPQAIVM) form a helical membrane-spanning segment. The Extracellular segment spans residues 192–222 (ECSTMLPGLANKTTLFTVCDERWGGEIYPKM). The N-linked (GlcNAc...) asparagine glycan is linked to Asn202. A helical transmembrane segment spans residues 223–243 (YHICFFLVTYMAPLCLMVLAY). Residues 244–304 (LQIFRKLWCR…QIRARRKTAR (61 aa)) lie on the Cytoplasmic side of the membrane. The helical transmembrane segment at 305 to 326 (MLMVVLLVFAICYLPISILNVL) threads the bilayer. The Extracellular segment spans residues 327 to 342 (KRVFGMFTHTEDRETV). The helical transmembrane segment at 343 to 366 (YAWFTFSHWLVYANSAANPIIYNF) threads the bilayer. Over 367–444 (LSGKFREEFK…ANGAGQLQNW (78 aa)) the chain is Cytoplasmic.

Belongs to the G-protein coupled receptor 1 family.

It is found in the cell membrane. Nonselective, high-affinity receptor for both orexin-A and orexin-B neuropeptides. Triggers an increase in cytoplasmic Ca(2+) levels in response to orexin-A binding. This Sus scrofa (Pig) protein is Orexin receptor type 2 (HCRTR2).